Here is a 236-residue protein sequence, read N- to C-terminus: UPF0502 protein Bcenmc03_4618 (236 aa).

It belongs to the UPF0502 family.

The protein is UPF0502 protein Bcenmc03_4618 of Burkholderia orbicola (strain MC0-3).